The following is a 785-amino-acid chain: Phenylalanine--tRNA ligase beta subunit (785 aa).

A tRNA-binding domain is found at 39–147 (FPIPRGVVFA…DALPPGTPLA (109 aa)). The region spanning 399-474 (KPPEAIPFRP…RIQGYETIPL (76 aa)) is the B5 domain. Mg(2+)-binding residues include Asp452, Asp458, Glu461, and Glu462. One can recognise an FDX-ACB domain in the interval 688–780 (SRHPAAFRDL…ALRARGFGLR (93 aa)).

This sequence belongs to the phenylalanyl-tRNA synthetase beta subunit family. Type 1 subfamily. As to quaternary structure, tetramer of two alpha and two beta subunits. Mg(2+) is required as a cofactor.

The protein resides in the cytoplasm. The catalysed reaction is tRNA(Phe) + L-phenylalanine + ATP = L-phenylalanyl-tRNA(Phe) + AMP + diphosphate + H(+). The polypeptide is Phenylalanine--tRNA ligase beta subunit (Thermus thermophilus (strain ATCC BAA-163 / DSM 7039 / HB27)).